The primary structure comprises 338 residues: Ketol-acid reductoisomerase (NADP(+)) (338 aa).

One can recognise a KARI N-terminal Rossmann domain in the interval 1 to 181 (MKVFYDKDCD…GGGRTGIIET (181 aa)). NADP(+)-binding positions include 24-27 (YGSQ), R47, S50, T52, and 82-85 (DEFQ). The active site involves H107. An NADP(+)-binding site is contributed by G133. The KARI C-terminal knotted domain maps to 182–327 (TFKDETETDL…EKLRSMMPWI (146 aa)). Mg(2+) contacts are provided by D190, E194, E226, and E230. S251 contacts substrate.

This sequence belongs to the ketol-acid reductoisomerase family. It depends on Mg(2+) as a cofactor.

The catalysed reaction is (2R)-2,3-dihydroxy-3-methylbutanoate + NADP(+) = (2S)-2-acetolactate + NADPH + H(+). It carries out the reaction (2R,3R)-2,3-dihydroxy-3-methylpentanoate + NADP(+) = (S)-2-ethyl-2-hydroxy-3-oxobutanoate + NADPH + H(+). Its pathway is amino-acid biosynthesis; L-isoleucine biosynthesis; L-isoleucine from 2-oxobutanoate: step 2/4. It participates in amino-acid biosynthesis; L-valine biosynthesis; L-valine from pyruvate: step 2/4. In terms of biological role, involved in the biosynthesis of branched-chain amino acids (BCAA). Catalyzes an alkyl-migration followed by a ketol-acid reduction of (S)-2-acetolactate (S2AL) to yield (R)-2,3-dihydroxy-isovalerate. In the isomerase reaction, S2AL is rearranged via a Mg-dependent methyl migration to produce 3-hydroxy-3-methyl-2-ketobutyrate (HMKB). In the reductase reaction, this 2-ketoacid undergoes a metal-dependent reduction by NADPH to yield (R)-2,3-dihydroxy-isovalerate. This Pseudomonas syringae pv. tomato (strain ATCC BAA-871 / DC3000) protein is Ketol-acid reductoisomerase (NADP(+)).